The chain runs to 480 residues: NADH-quinone oxidoreductase subunit N (480 aa).

A run of 13 helical transmembrane segments spans residues 10–30, 40–60, 80–100, 117–137, 166–186, 208–228, 246–266, 276–296, 304–324, 330–350, 374–394, 409–431, and 452–472; these read FISI…ILIE, WSSL…WGGI, FFTV…TAFF, AVFG…FLGI, LMGS…YGAI, VLFF…AALV, TAFM…RLFF, WNQV…FVAL, FFAY…VIGN, ALTF…AVLA, LASL…TAGF, YYGL…LRII, and IVGT…APFL.

Belongs to the complex I subunit 2 family. In terms of assembly, NDH-1 is composed of 14 different subunits. Subunits NuoA, H, J, K, L, M, N constitute the membrane sector of the complex.

The protein localises to the cell inner membrane. The catalysed reaction is a quinone + NADH + 5 H(+)(in) = a quinol + NAD(+) + 4 H(+)(out). Functionally, NDH-1 shuttles electrons from NADH, via FMN and iron-sulfur (Fe-S) centers, to quinones in the respiratory chain. The immediate electron acceptor for the enzyme in this species is believed to be ubiquinone. Couples the redox reaction to proton translocation (for every two electrons transferred, four hydrogen ions are translocated across the cytoplasmic membrane), and thus conserves the redox energy in a proton gradient. This Protochlamydia amoebophila (strain UWE25) protein is NADH-quinone oxidoreductase subunit N.